The primary structure comprises 182 residues: Peptide methionine sulfoxide reductase MsrA (182 aa).

Cys13 is an active-site residue.

It belongs to the MsrA Met sulfoxide reductase family.

It carries out the reaction L-methionyl-[protein] + [thioredoxin]-disulfide + H2O = L-methionyl-(S)-S-oxide-[protein] + [thioredoxin]-dithiol. The catalysed reaction is [thioredoxin]-disulfide + L-methionine + H2O = L-methionine (S)-S-oxide + [thioredoxin]-dithiol. Its function is as follows. Has an important function as a repair enzyme for proteins that have been inactivated by oxidation. Catalyzes the reversible oxidation-reduction of methionine sulfoxide in proteins to methionine. The protein is Peptide methionine sulfoxide reductase MsrA of Mycobacterium bovis (strain ATCC BAA-935 / AF2122/97).